Reading from the N-terminus, the 232-residue chain is Large ribosomal subunit protein uL1 (232 aa).

Belongs to the universal ribosomal protein uL1 family. In terms of assembly, part of the 50S ribosomal subunit.

Binds directly to 23S rRNA. The L1 stalk is quite mobile in the ribosome, and is involved in E site tRNA release. Functionally, protein L1 is also a translational repressor protein, it controls the translation of the L11 operon by binding to its mRNA. The chain is Large ribosomal subunit protein uL1 from Dichelobacter nodosus (strain VCS1703A).